Reading from the N-terminus, the 352-residue chain is Protein AMBP (352 aa).

The first 19 residues, 1–19 (MRSLSGLLLLLTACLAVNA), serve as a signal peptide directing secretion. 3-hydroxy-L-kynurenine-binding residues include Cys53 and Lys111. Cysteines 91 and 188 form a disulfide. The N-linked (GlcNAc...) asparagine glycan is linked to Asn115. 2 residues coordinate 3-hydroxy-L-kynurenine: Lys137 and Lys149. Residue Ser215 is glycosylated (O-linked (Xyl...) (chondroitin sulfate) serine). 2 N-linked (GlcNAc...) asparagine glycosylation sites follow: Asn223 and Asn250. Intrachain disulfides connect Cys231–Cys281, Cys240–Cys264, Cys256–Cys277, Cys287–Cys337, Cys296–Cys320, and Cys312–Cys333. BPTI/Kunitz inhibitor domains follow at residues 231 to 281 (CQLD…LQTC) and 287 to 337 (CNLP…KEYC).

The protein in the N-terminal section; belongs to the calycin superfamily. Lipocalin family. As to quaternary structure, monomer. Homodimer. In plasma, it occurs as a monomer or dimer and in covalently-linked complexes with immunoglobulin A (IgA), ALB/albumin and F2/prothrombin. Chromophore-bound alpha-1-microglobulin interacts with the constant region of immunoglobulin A. Chromophore-bound alpha-1-microglobulin interacts with ALB with molar ratio 2:1 and 1:1; this interaction does not prevent fatty acid binding to ALB. Interacts with F2/prothrombin (via N-terminus) with molar ratio 2:1 and 1:1; this interaction does not prevent the activation of prothrombin to thrombin. Interacts with NDUFAB1, a subunit of mitochondrial complex I. Interacts with FN1. I-alpha-I plasma protease inhibitors are assembled from one or two heavy chains (HC) and one light chain, bikunin. Inter-alpha-inhibitor (I-alpha-I) is composed of ITIH1/HC1, ITIH2/HC2 and bikunin, and pre-alpha-inhibitor (P-alpha-I) of ITIH3/HC3 and bikunin. Interacts with TNFAIP6 (via Link domain). In terms of assembly, monomer. Also occurs as a complex with tryptase in mast cells. The precursor is proteolytically processed into separately functioning proteins. In terms of processing, 3-hydroxykynurenine, an oxidized tryptophan metabolite that is common in biological fluids, reacts with Cys-53, Lys-111, Lys-137, and Lys-149 to form heterogeneous polycyclic chromophores including hydroxanthommatin. The reaction by alpha-1-microglobulin is autocatalytic; the human protein forms chromophore even when expressed in insect and bacterial cells. The chromophore can react with accessible cysteines forming non-reducible thioether cross-links with other molecules of alpha-1-microglobulin or with other proteins such as Ig alpha-1 chain C region 'Cys-352'. Post-translationally, heavy chains are interlinked with bikunin via a chondroitin 4-sulfate bridge to the C-terminal aspartate. Proteolytically cleaved by PRSS3 at Kunitz domain 2. Expressed by the liver and secreted in plasma.

The protein localises to the secreted. It localises to the endoplasmic reticulum. It is found in the cytoplasm. Its subcellular location is the cytosol. The protein resides in the cell membrane. The protein localises to the nucleus membrane. It localises to the mitochondrion inner membrane. It is found in the extracellular space. Its subcellular location is the extracellular matrix. In terms of biological role, antioxidant and tissue repair protein with reductase, heme-binding and radical-scavenging activities. Removes and protects against harmful oxidants and repairs macromolecules in intravascular and extravascular spaces and in intracellular compartments. Intravascularly, plays a regulatory role in red cell homeostasis by preventing heme- and reactive oxygen species-induced cell damage. Binds and degrades free heme to protect fetal and adult red blood cells from hemolysis. Reduces extracellular methemoglobin, a Fe3+ (ferric) form of hemoglobin that cannot bind oxygen, back to the Fe2+ (ferrous) form deoxyhemoglobin, which has oxygen-carrying potential. Upon acute inflammation, inhibits oxidation of low-density lipoprotein particles by MPO and limits vascular damage. Extravascularly, protects from oxidation products formed on extracellular matrix structures and cell membranes. Catalyzes the reduction of carbonyl groups on oxidized collagen fibers and preserves cellular and extracellular matrix ultrastructures. Importantly, counteracts the oxidative damage at blood-placenta interface, preventing leakage of free fetal hemoglobin into the maternal circulation. Intracellularly, has a role in maintaining mitochondrial redox homeostasis. Bound to complex I of the respiratory chain of mitochondria, may scavenge free radicals and preserve mitochondrial ATP synthesis. Protects renal tubule epithelial cells from heme-induced oxidative damage to mitochondria. Reduces cytochrome c from Fe3+ (ferric) to the Fe2+ (ferrous) state through formation of superoxide anion radicals in the presence of ascorbate or NADH/NADPH electron donor cofactors, ascorbate being the preferred cofactor. Has a chaperone role in facilitating the correct folding of bikunin in the endoplasmic reticulum compartment. Its function is as follows. Kunitz-type serine protease inhibitor and structural component of extracellular matrix with a role in extracellular space remodeling and cell adhesion. Among others, has antiprotease activity toward kallikrein, a protease involved in airway inflammation; inhibits GZMK/granzyme, a granule-stored serine protease involved in NK and T cell cytotoxic responses; and inhibits PLG/plasmin, a protease required for activation of matrix metalloproteinases. As part of I-alpha-I complex, provides for the heavy chains to be transferred from I-alpha-I complex to hyaluronan in the presence of TNFAIP6, in a dynamic process that releases free bikunin and remodels extracellular matrix proteoglycan structures. Free bikunin, but not its heavy chain-bound form, acts as a potent protease inhibitor in airway secretions. Part of hyaluronan-rich extracellular matrix that surrounds oocyte during cumulus oophorus expansion, an indispensable process for proper ovulation. Also inhibits calcium oxalate crystallization. Functionally, kunitz-type serine protease inhibitor. Has high catalytic efficiency for F10/blood coagulation factor Xa and may act as an anticoagulant by inhibiting prothrombin activation. Inhibits trypsin and mast cell CMA1/chymase and tryptase proteases. The protein is Protein AMBP (AMBP) of Bos taurus (Bovine).